Reading from the N-terminus, the 139-residue chain is Plastocyanin (139 aa).

A signal peptide spans 1–34; it reads MKLIAASLRRLSLAVLTVLLVVSSFAVFTPSASA. In terms of domain architecture, Plastocyanin-like spans 35–139; the sequence is ETYTVKLGSD…GMVGKITVAG (105 aa). Positions 73, 123, 126, and 131 each coordinate Cu cation.

Belongs to the plastocyanin family. It depends on Cu(2+) as a cofactor.

The protein resides in the cellular thylakoid membrane. In terms of biological role, participates in electron transfer between P700 and the cytochrome b6-f complex in photosystem I. This Nostoc sp. (strain PCC 7120 / SAG 25.82 / UTEX 2576) protein is Plastocyanin (petE).